The sequence spans 100 residues: Small ribosomal subunit protein bS20 (100 aa).

A compositionally biased stretch (basic and acidic residues) spans 1–18 (MPNKKSAEKRVRQSEQRR). The disordered stretch occupies residues 1-26 (MPNKKSAEKRVRQSEQRRQKNRGYQK).

The protein belongs to the bacterial ribosomal protein bS20 family.

Its function is as follows. Binds directly to 16S ribosomal RNA. This is Small ribosomal subunit protein bS20 from Petrotoga mobilis (strain DSM 10674 / SJ95).